The sequence spans 203 residues: Probable nicotinate-nucleotide adenylyltransferase (203 aa).

It belongs to the NadD family.

It catalyses the reaction nicotinate beta-D-ribonucleotide + ATP + H(+) = deamido-NAD(+) + diphosphate. It functions in the pathway cofactor biosynthesis; NAD(+) biosynthesis; deamido-NAD(+) from nicotinate D-ribonucleotide: step 1/1. Its function is as follows. Catalyzes the reversible adenylation of nicotinate mononucleotide (NaMN) to nicotinic acid adenine dinucleotide (NaAD). This chain is Probable nicotinate-nucleotide adenylyltransferase, found in Prosthecochloris aestuarii (strain DSM 271 / SK 413).